Reading from the N-terminus, the 435-residue chain is Gamma-glutamyl phosphate reductase (435 aa).

The protein belongs to the gamma-glutamyl phosphate reductase family.

Its subcellular location is the cytoplasm. The enzyme catalyses L-glutamate 5-semialdehyde + phosphate + NADP(+) = L-glutamyl 5-phosphate + NADPH + H(+). The protein operates within amino-acid biosynthesis; L-proline biosynthesis; L-glutamate 5-semialdehyde from L-glutamate: step 2/2. In terms of biological role, catalyzes the NADPH-dependent reduction of L-glutamate 5-phosphate into L-glutamate 5-semialdehyde and phosphate. The product spontaneously undergoes cyclization to form 1-pyrroline-5-carboxylate. The polypeptide is Gamma-glutamyl phosphate reductase (Aquifex aeolicus (strain VF5)).